A 190-amino-acid polypeptide reads, in one-letter code: Holliday junction branch migration complex subunit RuvA (190 aa).

Residues 1–64 form a domain I region; the sequence is MIGKLSGTLD…EDAQILYGFA (64 aa). The segment at 65–137 is domain II; it reads TSQERAAFRE…LKGKLGPDIG (73 aa). The tract at residues 137–141 is flexible linker; the sequence is GVAAS. A domain III region spans residues 142-190; that stretch reads VANDSQADILQALLALGYSDKEAAAALKALPSDVGVSEGIRLALRALGK.

This sequence belongs to the RuvA family. In terms of assembly, homotetramer. Forms an RuvA(8)-RuvB(12)-Holliday junction (HJ) complex. HJ DNA is sandwiched between 2 RuvA tetramers; dsDNA enters through RuvA and exits via RuvB. An RuvB hexamer assembles on each DNA strand where it exits the tetramer. Each RuvB hexamer is contacted by two RuvA subunits (via domain III) on 2 adjacent RuvB subunits; this complex drives branch migration. In the full resolvosome a probable DNA-RuvA(4)-RuvB(12)-RuvC(2) complex forms which resolves the HJ.

Its subcellular location is the cytoplasm. In terms of biological role, the RuvA-RuvB-RuvC complex processes Holliday junction (HJ) DNA during genetic recombination and DNA repair, while the RuvA-RuvB complex plays an important role in the rescue of blocked DNA replication forks via replication fork reversal (RFR). RuvA specifically binds to HJ cruciform DNA, conferring on it an open structure. The RuvB hexamer acts as an ATP-dependent pump, pulling dsDNA into and through the RuvAB complex. HJ branch migration allows RuvC to scan DNA until it finds its consensus sequence, where it cleaves and resolves the cruciform DNA. The polypeptide is Holliday junction branch migration complex subunit RuvA (Albidiferax ferrireducens (strain ATCC BAA-621 / DSM 15236 / T118) (Rhodoferax ferrireducens)).